The chain runs to 310 residues: Bifunctional protein FolD 3, chloroplastic (310 aa).

The N-terminal 48 residues, 1–48, are a transit peptide targeting the chloroplast; sequence MFTDCSSSTTSRLIHLYNRNGVFLPRPSVSQFSLRTTASTWRCTLSIR.

It belongs to the tetrahydrofolate dehydrogenase/cyclohydrolase family. In terms of assembly, homodimer.

The protein resides in the plastid. Its subcellular location is the chloroplast. It catalyses the reaction (6R)-5,10-methylene-5,6,7,8-tetrahydrofolate + NADP(+) = (6R)-5,10-methenyltetrahydrofolate + NADPH. The enzyme catalyses (6R)-5,10-methenyltetrahydrofolate + H2O = (6R)-10-formyltetrahydrofolate + H(+). The protein operates within one-carbon metabolism; tetrahydrofolate interconversion. In terms of biological role, catalyzes the oxidation of 5,10-methylenetetrahydrofolate to 5,10-methenyltetrahydrofolate and then the hydrolysis of 5,10-methenyltetrahydrofolate to 10-formyltetrahydrofolate. The protein is Bifunctional protein FolD 3, chloroplastic (FOLD3) of Arabidopsis thaliana (Mouse-ear cress).